Here is a 398-residue protein sequence, read N- to C-terminus: Queuine tRNA-ribosyltransferase (398 aa).

The Proton acceptor role is filled by D102. Residues 102–106 (DSGGF), D156, Q205, and G232 contribute to the substrate site. The tract at residues 263-269 (GVGTPED) is RNA binding. D282 functions as the Nucleophile in the catalytic mechanism. The segment at 287-291 (TRNAR) is RNA binding; important for wobble base 34 recognition. 4 residues coordinate Zn(2+): C320, C322, C325, and H362.

It belongs to the queuine tRNA-ribosyltransferase family. As to quaternary structure, homodimer. Within each dimer, one monomer is responsible for RNA recognition and catalysis, while the other monomer binds to the replacement base PreQ1. Zn(2+) serves as cofactor.

It carries out the reaction 7-aminomethyl-7-carbaguanine + guanosine(34) in tRNA = 7-aminomethyl-7-carbaguanosine(34) in tRNA + guanine. It participates in tRNA modification; tRNA-queuosine biosynthesis. In terms of biological role, catalyzes the base-exchange of a guanine (G) residue with the queuine precursor 7-aminomethyl-7-deazaguanine (PreQ1) at position 34 (anticodon wobble position) in tRNAs with GU(N) anticodons (tRNA-Asp, -Asn, -His and -Tyr). Catalysis occurs through a double-displacement mechanism. The nucleophile active site attacks the C1' of nucleotide 34 to detach the guanine base from the RNA, forming a covalent enzyme-RNA intermediate. The proton acceptor active site deprotonates the incoming PreQ1, allowing a nucleophilic attack on the C1' of the ribose to form the product. After dissociation, two additional enzymatic reactions on the tRNA convert PreQ1 to queuine (Q), resulting in the hypermodified nucleoside queuosine (7-(((4,5-cis-dihydroxy-2-cyclopenten-1-yl)amino)methyl)-7-deazaguanosine). The sequence is that of Queuine tRNA-ribosyltransferase from Polaromonas sp. (strain JS666 / ATCC BAA-500).